A 570-amino-acid polypeptide reads, in one-letter code: Proline--tRNA ligase (570 aa).

The protein belongs to the class-II aminoacyl-tRNA synthetase family. ProS type 1 subfamily. Homodimer.

It is found in the cytoplasm. It carries out the reaction tRNA(Pro) + L-proline + ATP = L-prolyl-tRNA(Pro) + AMP + diphosphate. Its function is as follows. Catalyzes the attachment of proline to tRNA(Pro) in a two-step reaction: proline is first activated by ATP to form Pro-AMP and then transferred to the acceptor end of tRNA(Pro). As ProRS can inadvertently accommodate and process non-cognate amino acids such as alanine and cysteine, to avoid such errors it has two additional distinct editing activities against alanine. One activity is designated as 'pretransfer' editing and involves the tRNA(Pro)-independent hydrolysis of activated Ala-AMP. The other activity is designated 'posttransfer' editing and involves deacylation of mischarged Ala-tRNA(Pro). The misacylated Cys-tRNA(Pro) is not edited by ProRS. The chain is Proline--tRNA ligase from Shewanella pealeana (strain ATCC 700345 / ANG-SQ1).